The sequence spans 1409 residues: DNA-directed RNA polymerase subunit beta' (1409 aa).

Zn(2+) is bound by residues C70, C72, C85, and C88. 3 residues coordinate Mg(2+): D458, D460, and D462. Zn(2+) contacts are provided by C813, C887, C894, and C897.

It belongs to the RNA polymerase beta' chain family. In terms of assembly, the RNAP catalytic core consists of 2 alpha, 1 beta, 1 beta' and 1 omega subunit. When a sigma factor is associated with the core the holoenzyme is formed, which can initiate transcription. It depends on Mg(2+) as a cofactor. The cofactor is Zn(2+).

The catalysed reaction is RNA(n) + a ribonucleoside 5'-triphosphate = RNA(n+1) + diphosphate. Functionally, DNA-dependent RNA polymerase catalyzes the transcription of DNA into RNA using the four ribonucleoside triphosphates as substrates. This Acidovorax ebreus (strain TPSY) (Diaphorobacter sp. (strain TPSY)) protein is DNA-directed RNA polymerase subunit beta'.